A 130-amino-acid chain; its full sequence is Transcription antitermination protein NusB (130 aa).

The protein belongs to the NusB family.

Involved in transcription antitermination. Required for transcription of ribosomal RNA (rRNA) genes. Binds specifically to the boxA antiterminator sequence of the ribosomal RNA (rrn) operons. The chain is Transcription antitermination protein NusB from Macrococcus caseolyticus (strain JCSC5402) (Macrococcoides caseolyticum).